The sequence spans 437 residues: Probable eukaryotic translation initiation factor 5-2 (437 aa).

A GTP-binding site is contributed by 29–36 (GKGNGIKT). Composition is skewed to basic and acidic residues over residues 148–179 (EQKK…EQRK) and 191–212 (KDSK…HDEN). Disordered stretches follow at residues 148–231 (EQKK…WQTD) and 262–284 (EKKA…PPQE). Ser-201 is subject to Phosphoserine; by CK2. Residues 213–226 (ALEVDEDEDDDDGV) show a composition bias toward acidic residues. At Thr-230 the chain carries Phosphothreonine; by CK2. The region spanning 278–436 (ENPPPQEKNL…QSAESESEEE (159 aa)) is the W2 domain. Phosphoserine; by CK2 is present on residues Ser-428, Ser-431, and Ser-433.

It belongs to the eIF-2-beta/eIF-5 family. Phosphorylated at Ser-201, Thr-230, Ser-428, Ser-431, and Ser-433 by CK2.

Its function is as follows. Catalyzes the hydrolysis of GTP bound to the 40S ribosomal initiation complex (40S.mRNA.Met-tRNA[F].eIF-2.GTP) with the subsequent joining of a 60S ribosomal subunit resulting in the release of eIF-2 and the guanine nucleotide. The subsequent joining of a 60S ribosomal subunit results in the formation of a functional 80S initiation complex (80S.mRNA.Met-tRNA[F]). This Arabidopsis thaliana (Mouse-ear cress) protein is Probable eukaryotic translation initiation factor 5-2.